The sequence spans 216 residues: FMN-dependent NADH:quinone oxidoreductase 3 (216 aa).

FMN is bound by residues S10 and 16–18 (SAS).

Belongs to the azoreductase type 1 family. Homodimer. FMN is required as a cofactor.

The catalysed reaction is 2 a quinone + NADH + H(+) = 2 a 1,4-benzosemiquinone + NAD(+). The enzyme catalyses N,N-dimethyl-1,4-phenylenediamine + anthranilate + 2 NAD(+) = 2-(4-dimethylaminophenyl)diazenylbenzoate + 2 NADH + 2 H(+). Quinone reductase that provides resistance to thiol-specific stress caused by electrophilic quinones. Its function is as follows. Also exhibits azoreductase activity. Catalyzes the reductive cleavage of the azo bond in aromatic azo compounds to the corresponding amines. This chain is FMN-dependent NADH:quinone oxidoreductase 3, found in Pseudomonas fluorescens (strain ATCC BAA-477 / NRRL B-23932 / Pf-5).